We begin with the raw amino-acid sequence, 332 residues long: Receptor polysaccharide phosphotransferase WefC (332 aa).

The protein belongs to the stealth family.

The chain is Receptor polysaccharide phosphotransferase WefC (wefC) from Streptococcus oralis.